The primary structure comprises 379 residues: MSRTSAGELDVLKVQLKTWERQFLEENGRSPIKEDIKAHPEIRRKYKEYTSLKKLLSKGNAAVTGQKHGSPSRATHPTPQKHIDAEIELGPTPQIYGKVVSLFEMHISPLKKVPVRQLDADSSETCISPDLHSQDVAQSELLTDISCQAKRQLDFSVTPHASPVKAVQPLLLNAPDLRFEAIPHARTKYGPNSPVKFDGDVTLTLSQTPLQAKLAQASEGYSPSPLIKRPAKPLSQLAKEYEDIVEELKEVDHAAAVRNLGGLLQQEEENTQEAEAAEPSATRSDRKRRKNKVRPALVTLEEEIPQGNLHEQLVKLRQKALDKFNGNDPNDSSDEEKKTSATSAKPAKARKRKYNTVSDNFRRLKLPTKNTRNGRWRRR.

Disordered stretches follow at residues 60 to 79 (NAAVTGQKHGSPSRATHPTP), 263 to 292 (LLQQEEENTQEAEAAEPSATRSDRKRRKNK), and 322 to 379 (DKFN…WRRR). Residues 67–78 (KHGSPSRATHPT) are compositionally biased toward polar residues. Acidic residues predominate over residues 266 to 276 (QEEENTQEAEA).

Belongs to the SLD2 family.

The protein resides in the cytoplasm. It is found in the nucleus. Functionally, has a role in the initiation of DNA replication. Required at S-phase checkpoint. This chain is DNA replication regulator SLD2 (SLD2), found in Eremothecium gossypii (strain ATCC 10895 / CBS 109.51 / FGSC 9923 / NRRL Y-1056) (Yeast).